A 487-amino-acid polypeptide reads, in one-letter code: Protein Optix (487 aa).

A DNA-binding region (homeobox) is located at residues 154–214 (WDGEQKTHCF…KNRRQRDRAA (61 aa)). 2 disordered regions span residues 182–330 (NPTK…GAGP) and 443–463 (ASVG…GYHH). Residues 255-277 (GTHSPVPSSLQLQHSPGSTSNGA) show a composition bias toward polar residues. Basic and acidic residues predominate over residues 278–293 (NDREESLSVDDDKPRD). The segment covering 294 to 312 (LSGSLPLPLSLPLPLASPT) has biased composition (low complexity). The segment covering 321-330 (GYGGGAGAGP) has biased composition (gly residues).

The protein belongs to the SIX/Sine oculis homeobox family. As to expression, expressed during early development of the head. First expressed in a band around the anterior end of stage 5 blastoderm embryo, at 93% to 85% egg length. By gastrula stage, site of expression shifts to the dorsal-anterior region. At stage 12, expression is found in the clypeolabrum, the stomodaeum, and in ectoderm dorsal to the future supraesophageal ganglion.

It is found in the nucleus. Its function is as follows. May be involved in head or eye development; development of the clypeolabrum and several head sensory organs. The protein is Protein Optix (Optix) of Drosophila melanogaster (Fruit fly).